Consider the following 357-residue polypeptide: Alanine racemase (357 aa).

Lysine 34 (proton acceptor; specific for D-alanine) is an active-site residue. At lysine 34 the chain carries N6-(pyridoxal phosphate)lysine. Arginine 130 lines the substrate pocket. Tyrosine 253 (proton acceptor; specific for L-alanine) is an active-site residue. Methionine 301 contributes to the substrate binding site.

The protein belongs to the alanine racemase family. The cofactor is pyridoxal 5'-phosphate.

The catalysed reaction is L-alanine = D-alanine. It participates in amino-acid biosynthesis; D-alanine biosynthesis; D-alanine from L-alanine: step 1/1. Catalyzes the interconversion of L-alanine and D-alanine. May also act on other amino acids. The chain is Alanine racemase (alr) from Mannheimia succiniciproducens (strain KCTC 0769BP / MBEL55E).